Consider the following 294-residue polypeptide: ATP synthase gamma chain (294 aa).

Belongs to the ATPase gamma chain family. In terms of assembly, F-type ATPases have 2 components, CF(1) - the catalytic core - and CF(0) - the membrane proton channel. CF(1) has five subunits: alpha(3), beta(3), gamma(1), delta(1), epsilon(1). CF(0) has three main subunits: a, b and c.

It localises to the cell inner membrane. In terms of biological role, produces ATP from ADP in the presence of a proton gradient across the membrane. The gamma chain is believed to be important in regulating ATPase activity and the flow of protons through the CF(0) complex. The polypeptide is ATP synthase gamma chain (Rhizorhabdus wittichii (strain DSM 6014 / CCUG 31198 / JCM 15750 / NBRC 105917 / EY 4224 / RW1) (Sphingomonas wittichii)).